We begin with the raw amino-acid sequence, 1336 residues long: Putative botulinum-like toxin Wo (1336 aa).

The segment at 1-476 is has protease activity; the sequence is MDVLEMFDVN…VAGMQRMVSL (476 aa). Zn(2+) is bound at residue H250. E251 is an active-site residue. H254 and E296 together coordinate Zn(2+).

Belongs to the peptidase M27 family. The cofactor is Zn(2+).

The catalysed reaction is Limited hydrolysis of proteins of the neuroexocytosis apparatus, synaptobrevins, SNAP25 or syntaxin. No detected action on small molecule substrates.. Its activity is regulated as follows. Inhibited by EDTA and 1,10-phenanthroline. In terms of biological role, when overexpressed the N-terminus (residues 1-476) cleaves rat synaptobrevin-2/VAMP2 between '89-Trp-|-Trp-90' in vitro. This releases the cytoplasmic domain of VAMP2 from the synaptic vesicle membrane, which would prevent the assembly of the trans-SNARE complex on the membrane and thus prevent vesicle-target membrane fusion and neurotransmitter release. The polypeptide is Putative botulinum-like toxin Wo (Weissella oryzae (strain DSM 25784 / JCM 18191 / LMG 30913 / SG25)).